Consider the following 381-residue polypeptide: Probable 26S proteasome regulatory subunit rpn9 (381 aa).

The region spanning 177-343 (QYYRHCLLYL…QIVTISSVQS (167 aa)) is the PCI domain.

Belongs to the proteasome subunit S11 family.

Acts as a regulatory subunit of the 26S proteasome which is involved in the ATP-dependent degradation of ubiquitinated proteins. The polypeptide is Probable 26S proteasome regulatory subunit rpn9 (rpn9) (Schizosaccharomyces pombe (strain 972 / ATCC 24843) (Fission yeast)).